Consider the following 121-residue polypeptide: uncharacterized protein (121 aa).

The region spanning 43 to 86 (LKECSSHVAAFADCSKDKYISVVWECRELQQLMKNCLVEYTTSE) is the CHCH domain. 2 short sequence motifs (cx9C motif) span residues 46–56 (CSSHVAAFADC) and 68–78 (CRELQQLMKNC). 2 disulfide bridges follow: Cys-46–Cys-78 and Cys-56–Cys-68.

It belongs to the CMC family.

This is an uncharacterized protein from Dictyostelium discoideum (Social amoeba).